A 79-amino-acid chain; its full sequence is Neurotoxin 3FTx-LI (79 aa).

A signal peptide spans 1–21 (MKTLLLTLVVVTIVCLDLGYT). Intrachain disulfides connect Cys24–Cys43, Cys36–Cys61, Cys65–Cys71, and Cys72–Cys77.

Expressed by the venom gland.

The protein resides in the secreted. Its function is as follows. Blocks both the muscle-twitch response to nerve stimulation and the response to exogenous acetylcholine. This chain is Neurotoxin 3FTx-LI, found in Bungarus fasciatus (Banded krait).